Here is a 346-residue protein sequence, read N- to C-terminus: Phosphoribosylformylglycinamidine cyclo-ligase (346 aa).

It belongs to the AIR synthase family.

The protein resides in the cytoplasm. It catalyses the reaction 2-formamido-N(1)-(5-O-phospho-beta-D-ribosyl)acetamidine + ATP = 5-amino-1-(5-phospho-beta-D-ribosyl)imidazole + ADP + phosphate + H(+). It functions in the pathway purine metabolism; IMP biosynthesis via de novo pathway; 5-amino-1-(5-phospho-D-ribosyl)imidazole from N(2)-formyl-N(1)-(5-phospho-D-ribosyl)glycinamide: step 2/2. The chain is Phosphoribosylformylglycinamidine cyclo-ligase from Methylobacillus flagellatus (strain ATCC 51484 / DSM 6875 / VKM B-1610 / KT).